A 164-amino-acid chain; its full sequence is Large ribosomal subunit protein eL24 (164 aa).

Disordered regions lie at residues 63–82 (KDAA…KPYS) and 117–164 (ERIK…GGKA). Basic residues predominate over residues 71 to 81 (KKRRRATKKPY). Basic and acidic residues predominate over residues 117–133 (ERIKKTKDEKKAKKAEV).

It belongs to the eukaryotic ribosomal protein eL24 family.

The protein resides in the cytoplasm. The polypeptide is Large ribosomal subunit protein eL24 (RPL24) (Cicer arietinum (Chickpea)).